The following is a 2028-amino-acid chain: Pecanex-like protein 3 (2028 aa).

A run of 2 helical transmembrane segments spans residues 33 to 53 (CFHL…YMVL) and 54 to 74 (PPSL…FATI). An N-linked (GlcNAc...) asparagine glycan is attached at N95. Residues 96-116 (STMGEQEEEAAQGESSLPRDP) form a disordered region. Residue S127 is modified to Phosphoserine. T129 is modified (phosphothreonine). Disordered stretches follow at residues 193–239 (IGDL…PMSP) and 263–625 (LVRT…SHSR). Over residues 198–208 (QTPPGVVPDPS) the composition is skewed to pro residues. 2 stretches are compositionally biased toward basic and acidic residues: residues 263 to 273 (LVRTSSRREQC) and 305 to 319 (TDRE…EKTN). The N-linked (GlcNAc...) asparagine glycan is linked to N319. A Phosphothreonine modification is found at T370. Phosphoserine is present on residues S392 and S431. The span at 427–437 (GSELSPASSLR) shows a compositional bias: polar residues. The segment covering 444 to 459 (TDSSSSTSCYSPESSQ) has biased composition (low complexity). A compositionally biased stretch (polar residues) spans 488–497 (TQRTPSTASA). Phosphoserine is present on residues S505 and S521. 7 consecutive transmembrane segments (helical) span residues 793-815 (NIFG…LKGF), 819-836 (IWVF…YSLL), 852-872 (WVIA…IWLL), 880-900 (PFPP…FFCA), 903-923 (VATV…LPQV), 946-968 (SPLT…YGFC), and 980-1000 (HVPV…YHLS). S1025 carries the post-translational modification Phosphoserine. 4 helical membrane-spanning segments follow: residues 1053 to 1073 (LVMC…TVFI), 1078 to 1098 (VLGF…HYLL), 1244 to 1264 (FVLT…HAFA), and 1280 to 1300 (LLSG…VFIM). S1697 carries the phosphoserine modification. An N-linked (GlcNAc...) asparagine glycan is attached at N1770. The segment at 1845-2028 (GLTSLSNHPP…AAQPLLEHQY (184 aa)) is disordered. Residues 1890–1921 (RPPPLLQWPPPRLPGPPPASPAPTEGPRPSRP) are compositionally biased toward pro residues. A phosphoserine mark is found at S1909 and S1955. Residues 1966-1977 (PLDLSLSPDVSS) show a composition bias toward low complexity. Over residues 1978–1987 (EASPARTTQD) the composition is skewed to polar residues.

The protein belongs to the pecanex family.

It localises to the membrane. This Mus musculus (Mouse) protein is Pecanex-like protein 3.